Consider the following 341-residue polypeptide: S-adenosylmethionine:tRNA ribosyltransferase-isomerase (341 aa).

This sequence belongs to the QueA family. Monomer.

The protein localises to the cytoplasm. It catalyses the reaction 7-aminomethyl-7-carbaguanosine(34) in tRNA + S-adenosyl-L-methionine = epoxyqueuosine(34) in tRNA + adenine + L-methionine + 2 H(+). It participates in tRNA modification; tRNA-queuosine biosynthesis. Its function is as follows. Transfers and isomerizes the ribose moiety from AdoMet to the 7-aminomethyl group of 7-deazaguanine (preQ1-tRNA) to give epoxyqueuosine (oQ-tRNA). In Clostridium botulinum (strain Loch Maree / Type A3), this protein is S-adenosylmethionine:tRNA ribosyltransferase-isomerase.